Reading from the N-terminus, the 261-residue chain is MTHQTHAYHMVNPSPWPLTGALSALLMTSGLIMWFHYNSMALLTLGFTTNLLTMYQWWRDVIREGTFQGHHTPIVQKGLRYGMVLFIVSEVFFFAGFFWAFYHSSLAPTPELGGCWPPTGIIPLNPLEVPLLNTSVLLASGVSITWAHHSLMEGNRKHMLQALFITISLGVYFTLLQASEYYETSFTISDGVYGSTFFMATGFHGLHVIIGSTFLIVCFLRQLYYHFTSNHHFGFEAAAWYWHFVDVVWLFLYVSIYWWGS.

Over 1–15 (MTHQTHAYHMVNPSP) the chain is Mitochondrial matrix. A helical transmembrane segment spans residues 16–34 (WPLTGALSALLMTSGLIMW). The Mitochondrial intermembrane segment spans residues 35-40 (FHYNSM). Residues 41-66 (ALLTLGFTTNLLTMYQWWRDVIREGT) form a helical membrane-spanning segment. At 67–72 (FQGHHT) the chain is on the mitochondrial matrix side. Residues 73–105 (PIVQKGLRYGMVLFIVSEVFFFAGFFWAFYHSS) traverse the membrane as a helical segment. Residues 106–128 (LAPTPELGGCWPPTGIIPLNPLE) lie on the Mitochondrial intermembrane side of the membrane. Residues 129 to 152 (VPLLNTSVLLASGVSITWAHHSLM) traverse the membrane as a helical segment. Topologically, residues 153 to 155 (EGN) are mitochondrial matrix. The helical transmembrane segment at 156–183 (RKHMLQALFITISLGVYFTLLQASEYYE) threads the bilayer. The Mitochondrial intermembrane segment spans residues 184–190 (TSFTISD). The helical transmembrane segment at 191–223 (GVYGSTFFMATGFHGLHVIIGSTFLIVCFLRQL) threads the bilayer. Topologically, residues 224–232 (YYHFTSNHH) are mitochondrial matrix. Residues 233–256 (FGFEAAAWYWHFVDVVWLFLYVSI) traverse the membrane as a helical segment. Topologically, residues 257-261 (YWWGS) are mitochondrial intermembrane.

This sequence belongs to the cytochrome c oxidase subunit 3 family. As to quaternary structure, component of the cytochrome c oxidase (complex IV, CIV), a multisubunit enzyme composed of 14 subunits. The complex is composed of a catalytic core of 3 subunits MT-CO1, MT-CO2 and MT-CO3, encoded in the mitochondrial DNA, and 11 supernumerary subunits COX4I, COX5A, COX5B, COX6A, COX6B, COX6C, COX7A, COX7B, COX7C, COX8 and NDUFA4, which are encoded in the nuclear genome. The complex exists as a monomer or a dimer and forms supercomplexes (SCs) in the inner mitochondrial membrane with NADH-ubiquinone oxidoreductase (complex I, CI) and ubiquinol-cytochrome c oxidoreductase (cytochrome b-c1 complex, complex III, CIII), resulting in different assemblies (supercomplex SCI(1)III(2)IV(1) and megacomplex MCI(2)III(2)IV(2)).

It localises to the mitochondrion inner membrane. The enzyme catalyses 4 Fe(II)-[cytochrome c] + O2 + 8 H(+)(in) = 4 Fe(III)-[cytochrome c] + 2 H2O + 4 H(+)(out). Functionally, component of the cytochrome c oxidase, the last enzyme in the mitochondrial electron transport chain which drives oxidative phosphorylation. The respiratory chain contains 3 multisubunit complexes succinate dehydrogenase (complex II, CII), ubiquinol-cytochrome c oxidoreductase (cytochrome b-c1 complex, complex III, CIII) and cytochrome c oxidase (complex IV, CIV), that cooperate to transfer electrons derived from NADH and succinate to molecular oxygen, creating an electrochemical gradient over the inner membrane that drives transmembrane transport and the ATP synthase. Cytochrome c oxidase is the component of the respiratory chain that catalyzes the reduction of oxygen to water. Electrons originating from reduced cytochrome c in the intermembrane space (IMS) are transferred via the dinuclear copper A center (CU(A)) of subunit 2 and heme A of subunit 1 to the active site in subunit 1, a binuclear center (BNC) formed by heme A3 and copper B (CU(B)). The BNC reduces molecular oxygen to 2 water molecules using 4 electrons from cytochrome c in the IMS and 4 protons from the mitochondrial matrix. This Canis lupus familiaris (Dog) protein is Cytochrome c oxidase subunit 3 (MT-CO3).